We begin with the raw amino-acid sequence, 179 residues long: ADP-ribosylation factor-like protein 5A (179 aa).

Glycine 2 is lipidated: N-myristoyl glycine. GTP is bound by residues 23 to 30, 66 to 70, 125 to 128, and alanine 159; these read GLDNAGKT, DIGGQ, and NKQD.

The protein belongs to the small GTPase superfamily. Arf family.

Lacks ADP-ribosylation enhancing activity. The chain is ADP-ribosylation factor-like protein 5A (ARL5A) from Bos taurus (Bovine).